The sequence spans 334 residues: Protein-methionine-sulfoxide reductase catalytic subunit MsrP (334 aa).

The segment at residues 1 to 44 (MKKIRPLTEADVTAESAFFMQRRQVLKALGISAAALSLPSTAQA) is a signal peptide (tat-type signal). Residues Asn88, 91–92 (YE), Cys146, Thr181, Asn233, Arg238, and 249–251 (GIK) contribute to the Mo-molybdopterin site.

Belongs to the MsrP family. In terms of assembly, heterodimer of a catalytic subunit (MsrP) and a heme-binding subunit (MsrQ). Mo-molybdopterin serves as cofactor. Predicted to be exported by the Tat system. The position of the signal peptide cleavage has not been experimentally proven.

The protein resides in the periplasm. It carries out the reaction L-methionyl-[protein] + a quinone + H2O = L-methionyl-(S)-S-oxide-[protein] + a quinol. The enzyme catalyses L-methionyl-[protein] + a quinone + H2O = L-methionyl-(R)-S-oxide-[protein] + a quinol. Functionally, part of the MsrPQ system that repairs oxidized periplasmic proteins containing methionine sulfoxide residues (Met-O), using respiratory chain electrons. Thus protects these proteins from oxidative-stress damage caused by reactive species of oxygen and chlorine generated by the host defense mechanisms. MsrPQ is essential for the maintenance of envelope integrity under bleach stress, rescuing a wide series of structurally unrelated periplasmic proteins from methionine oxidation, including the primary periplasmic chaperone SurA and the lipoprotein Pal. The catalytic subunit MsrP is non-stereospecific, being able to reduce both (R-) and (S-) diastereoisomers of methionine sulfoxide. In Salmonella newport (strain SL254), this protein is Protein-methionine-sulfoxide reductase catalytic subunit MsrP.